Reading from the N-terminus, the 368-residue chain is Uroporphyrinogen decarboxylase (368 aa).

Substrate contacts are provided by residues Arg41–Arg45, Asp91, Tyr168, Ser223, and His345.

This sequence belongs to the uroporphyrinogen decarboxylase family. As to quaternary structure, homodimer.

The protein localises to the cytoplasm. It catalyses the reaction uroporphyrinogen III + 4 H(+) = coproporphyrinogen III + 4 CO2. It participates in porphyrin-containing compound metabolism; protoporphyrin-IX biosynthesis; coproporphyrinogen-III from 5-aminolevulinate: step 4/4. Its function is as follows. Catalyzes the decarboxylation of four acetate groups of uroporphyrinogen-III to yield coproporphyrinogen-III. This chain is Uroporphyrinogen decarboxylase, found in Psychrobacter sp. (strain PRwf-1).